Reading from the N-terminus, the 259-residue chain is MTEPTPAVPETDDLAEPRLVIEPGVAARFCAVAEPVLMAMGYRLVRIKVSGDAGCTVQIMAERPDGTMLIDDCEAASRALSPVLDVADPIDRAYRLEISSPGIDRPLVRRSDFARYAGHLVKIEMAVPHQGRKRYRGLLDGVEGDAVRVQREGATKDEDPLVLLPMHDIGDARLVLTDELIAESMRRGKQAERDLKQSLGLAPEPPPHAKRSDPKKSHAPKRGPKAAKAPTKPKPQNTKQHRLAADKARRGEIDTSEGD.

Residues 198-259 are disordered; it reads SLGLAPEPPP…RGEIDTSEGD (62 aa). Residues 243–253 show a composition bias toward basic and acidic residues; that stretch reads LAADKARRGEI.

The protein belongs to the RimP family.

The protein resides in the cytoplasm. In terms of biological role, required for maturation of 30S ribosomal subunits. The polypeptide is Ribosome maturation factor RimP (Rhodopseudomonas palustris (strain TIE-1)).